The chain runs to 133 residues: ATP synthase epsilon chain (133 aa).

The protein belongs to the ATPase epsilon chain family. As to quaternary structure, F-type ATPases have 2 components, CF(1) - the catalytic core - and CF(0) - the membrane proton channel. CF(1) has five subunits: alpha(3), beta(3), gamma(1), delta(1), epsilon(1). CF(0) has three main subunits: a, b and c.

The protein resides in the cell membrane. Functionally, produces ATP from ADP in the presence of a proton gradient across the membrane. This is ATP synthase epsilon chain from Clostridium botulinum (strain Langeland / NCTC 10281 / Type F).